A 393-amino-acid chain; its full sequence is Dual specificity mitogen-activated protein kinase kinase 1 (393 aa).

The segment at 1 to 27 (MPKKKPTPIQLNPAPDGSAVNGTSSAE) is disordered. Residues 68–361 (FEKISELGAG…LKQLMVHAFI (294 aa)) form the Protein kinase domain. Residues 74–82 (LGAGNGGVV) and lysine 97 each bind ATP. Aspartate 190 (proton acceptor) is an active-site residue. A phosphoserine; by RAF mark is found at serine 218 and serine 222. The RAF1-binding stretch occupies residues 270-307 (ELELMFGCQVEGDAAETPPRPRTPGRPLSSYGMDSRPP). Threonine 286 bears the Phosphothreonine mark. Threonine 292 carries the phosphothreonine; by MAPK1 modification. A Phosphoserine; by PAK modification is found at serine 298.

This sequence belongs to the protein kinase superfamily. STE Ser/Thr protein kinase family. MAP kinase kinase subfamily. As to quaternary structure, found in a complex with at least BRAF, HRAS, MAP2K1, MAPK3/ERK1 and RGS14. Forms a heterodimer with MAP2K2/MEK2. Forms heterodimers with KSR2 which further dimerize to form tetramers. Interacts with KSR1 or KSR2 and BRAF; the interaction with KSR1 or KSR2 mediates KSR1-BRAF or KSR2-BRAF dimerization. Interacts with ARBB2, LAMTOR3, MAPK1/ERK2 and RAF1. Interacts with MAPK1/ERK2. Interacts with MORG1. Interacts with PPARG. Interacts with SGK1. Interacts with BIRC6/bruce. Interacts with KAT7; the interaction promotes KAT7 phosphorylation. Interacts with RAF1 and NEK10; the interaction is required for ERK1/2-signaling pathway activation in response to UV irradiation. Interacts with TRAF3IP3. Interacts with MOS. Post-translationally, phosphorylation at Ser-218 and Ser-222 by MAP kinase kinase kinases (RAF or MEKK1) positively regulates the kinase activity. Also phosphorylated at Thr-292 by MAPK1/ERK2 and at Ser-298 by PAK. MAPK1/ERK2 phosphorylation of Thr-292 occurs in response to cellular adhesion and leads to inhibition of Ser-298 phosphorylation by PAK. Autophosphorylated at Ser-218 and Ser-222, autophosphosphorylation is promoted by NEK10 following UV irradiation.

It localises to the cytoplasm. Its subcellular location is the cytoskeleton. It is found in the microtubule organizing center. The protein resides in the centrosome. The protein localises to the spindle pole body. It localises to the nucleus. Its subcellular location is the membrane. It carries out the reaction L-seryl-[protein] + ATP = O-phospho-L-seryl-[protein] + ADP + H(+). It catalyses the reaction L-threonyl-[protein] + ATP = O-phospho-L-threonyl-[protein] + ADP + H(+). The enzyme catalyses L-tyrosyl-[protein] + ATP = O-phospho-L-tyrosyl-[protein] + ADP + H(+). Ras proteins such as HRAS mediate the activation of RAF proteins such as RAF1 or BRAF which in turn activate extracellular signal-regulated kinases (ERK) through MAPK (mitogen-activated protein kinases) and ERK kinases MAP2K1/MEK1 and MAP2K2/MEK2. Activation occurs through phosphorylation of Ser-218 and Ser-222. MAP2K1/MEK1 binds KSR1 or KSR2 releasing the inhibitory intramolecular interaction between KSR1 or KSR2 protein kinase and N-terminal domains. This allows KSR1 or KSR2 dimerization with BRAF leading to BRAF activation and phosphorylation of MAP2K1. MAP2K1/MEK1 is also the target of negative feed-back regulation by its substrate kinases, such as MAPK1/ERK2. These phosphorylate MAP2K1/MEK1 on Thr-292, thereby facilitating dephosphorylation of the activating residues Ser-218 and Ser-222. Inhibited by serine/threonine phosphatase 2A. In terms of biological role, dual specificity protein kinase which acts as an essential component of the MAP kinase signal transduction pathway. Binding of extracellular ligands such as growth factors, cytokines and hormones to their cell-surface receptors activates RAS and this initiates RAF1 activation. RAF1 then further activates the dual-specificity protein kinases MAP2K1/MEK1 and MAP2K2/MEK2. Both MAP2K1/MEK1 and MAP2K2/MEK2 function specifically in the MAPK/ERK cascade, and catalyze the concomitant phosphorylation of a threonine and a tyrosine residue in a Thr-Glu-Tyr sequence located in the extracellular signal-regulated kinases MAPK3/ERK1 and MAPK1/ERK2, leading to their activation and further transduction of the signal within the MAPK/ERK cascade. Activates BRAF in a KSR1 or KSR2-dependent manner; by binding to KSR1 or KSR2 releases the inhibitory intramolecular interaction between KSR1 or KSR2 protein kinase and N-terminal domains which promotes KSR1 or KSR2-BRAF dimerization and BRAF activation. Depending on the cellular context, this pathway mediates diverse biological functions such as cell growth, adhesion, survival and differentiation, predominantly through the regulation of transcription, metabolism and cytoskeletal rearrangements. One target of the MAPK/ERK cascade is peroxisome proliferator-activated receptor gamma (PPARG), a nuclear receptor that promotes differentiation and apoptosis. MAP2K1/MEK1 has been shown to export PPARG from the nucleus. The MAPK/ERK cascade is also involved in the regulation of endosomal dynamics, including lysosome processing and endosome cycling through the perinuclear recycling compartment (PNRC), as well as in the fragmentation of the Golgi apparatus during mitosis. In Oryctolagus cuniculus (Rabbit), this protein is Dual specificity mitogen-activated protein kinase kinase 1 (MAP2K1).